The following is a 264-amino-acid chain: Chanoclavine-I dehydrogenase easD (264 aa).

An N-terminal signal peptide occupies residues 1 to 20; it reads MASVSSKIFAITGGASGIGA. Residues isoleucine 18, aspartate 66, arginine 132, tyrosine 169, lysine 173, and threonine 204 each coordinate NADP(+). Tyrosine 169 acts as the Proton donor in catalysis. The active-site Lowers pKa of active site Tyr is the lysine 173.

It belongs to the short-chain dehydrogenases/reductases (SDR) family. In terms of assembly, homotetramer.

It catalyses the reaction chanoclavine-I + NAD(+) = chanoclavine-I aldehyde + NADH + H(+). The protein operates within alkaloid biosynthesis; ergot alkaloid biosynthesis. In terms of biological role, chanoclavine-I dehydrogenase; part of the gene cluster that mediates the biosynthesis of fungal ergot alkaloid. DmaW catalyzes the first step of ergot alkaloid biosynthesis by condensing dimethylallyl diphosphate (DMAP) and tryptophan to form 4-dimethylallyl-L-tryptophan. The second step is catalyzed by the methyltransferase easF that methylates 4-dimethylallyl-L-tryptophan in the presence of S-adenosyl-L-methionine, resulting in the formation of 4-dimethylallyl-L-abrine. The catalase easC and the FAD-dependent oxidoreductase easE then transform 4-dimethylallyl-L-abrine to chanoclavine-I which is further oxidized by easD in the presence of NAD(+), resulting in the formation of chanoclavine-I aldehyde. Chanoclavine-I aldehyde is the precursor of ergoamides and ergopeptines in Clavicipitaceae, and clavine-type alcaloids such as fumiclavine in Trichocomaceae. However, the metabolites downstream of chanoclavine-I aldehyde in Arthrodermataceae have not been identified yet. The sequence is that of Chanoclavine-I dehydrogenase easD from Arthroderma otae (strain ATCC MYA-4605 / CBS 113480) (Microsporum canis).